Here is a 526-residue protein sequence, read N- to C-terminus: Variant surface glycoprotein MITAT 1.4A (526 aa).

The first 33 residues, 1 to 33 (MDCHTKETLGVTQWRRSTMLTLSLLYAITPADG), serve as a signal peptide directing secretion. Cystine bridges form between Cys47-Cys173 and Cys154-Cys215. The tract at residues 157–193 (NEGGDGDGKDQLAPKGCRHGTEADFDAGAGPAESEVA) is disordered. N-linked (GlcNAc...) asparagine glycosylation occurs at Asn453. The GPI-anchor amidated aspartate moiety is linked to residue Asp503. A propeptide spans 504 to 526 (SSILVTKKFALTVVSAAFVALLF) (removed in mature form).

The protein resides in the cell membrane. Its function is as follows. VSG forms a coat on the surface of the parasite. The trypanosome evades the immune response of the host by expressing a series of antigenically distinct VSGs from an estimated 1000 VSG genes. This is Variant surface glycoprotein MITAT 1.4A from Trypanosoma brucei brucei.